Here is a 301-residue protein sequence, read N- to C-terminus: Methionyl-tRNA formyltransferase (301 aa).

109 to 112 (SLLP) lines the (6S)-5,6,7,8-tetrahydrofolate pocket.

It belongs to the Fmt family.

The catalysed reaction is L-methionyl-tRNA(fMet) + (6R)-10-formyltetrahydrofolate = N-formyl-L-methionyl-tRNA(fMet) + (6S)-5,6,7,8-tetrahydrofolate + H(+). Its function is as follows. Attaches a formyl group to the free amino group of methionyl-tRNA(fMet). The formyl group appears to play a dual role in the initiator identity of N-formylmethionyl-tRNA by promoting its recognition by IF2 and preventing the misappropriation of this tRNA by the elongation apparatus. The chain is Methionyl-tRNA formyltransferase from Jannaschia sp. (strain CCS1).